The sequence spans 215 residues: uncharacterized protein (215 aa).

This is an uncharacterized protein from Haemophilus influenzae (strain ATCC 51907 / DSM 11121 / KW20 / Rd).